The sequence spans 554 residues: Solute carrier family 22 member 22 (554 aa).

The Cytoplasmic portion of the chain corresponds to 1–15; the sequence is MDFDEILHHVGDSGR. A helical membrane pass occupies residues 16–36; sequence FQICMIILLNILSLVLSPHDV. Topologically, residues 37–144 are extracellular; the sequence is LENFTAAIPA…DLVCDFQSFK (108 aa). An N-linked (GlcNAc...) asparagine glycan is attached at Asn-39. A helical transmembrane segment spans residues 145-165; that stretch reads YYAQATSLAGHLVSCPLSGII. The Cytoplasmic segment spans residues 166–172; sequence SDRFGRK. A helical membrane pass occupies residues 173–193; the sequence is PLLMYCSLAYGAVGTYCAFAP. Asn-194 carries N-linked (GlcNAc...) asparagine glycosylation. At 194–199 the chain is on the extracellular side; it reads NFSVYC. A helical transmembrane segment spans residues 200 to 220; that stretch reads VLRFLLSAFQSTILINSLILV. Residues 221 to 231 are Cytoplasmic-facing; the sequence is LEEASVQWHPT. Residues 232–252 traverse the membrane as a helical segment; it reads IIVLSGLFNSIGQGVLGGLAY. The Extracellular segment spans residues 253–258; sequence VISDWH. Residues 259 to 279 form a helical membrane-spanning segment; the sequence is LLQLAYALPFFIFFVLFCWVP. Topologically, residues 280–347 are cytoplasmic; that stretch reads ESVRWLIITG…DIFINPLIRK (68 aa). The helical transmembrane segment at 348-368 threads the bilayer; the sequence is IVLSNSSLLFAELFSFVGLLL. Over 369-376 the chain is Extracellular; sequence DVQLLGKN. A helical transmembrane segment spans residues 377–397; the sequence is MFLTQIFLGAIDVPSKSLTYF. Residues 398–405 are Cytoplasmic-facing; sequence TIRNVSRR. The helical transmembrane segment at 406-426 threads the bilayer; that stretch reads PLIAFLLLTTGSCITITIFIS. Residues 427 to 434 are Extracellular-facing; sequence EEMYVLRT. A helical membrane pass occupies residues 435–455; the sequence is IIFILGKGCFAAFTCISTTYI. Residues 456-466 lie on the Cytoplasmic side of the membrane; sequence NELSPVELRST. A helical transmembrane segment spans residues 467 to 487; it reads LNGVFLAVVRLAGVLSALTLA. At 488-491 the chain is on the extracellular side; that stretch reads TRKY. Residues 492–512 form a helical membrane-spanning segment; that stretch reads FVYLPMILYGVLPIVATISIL. Over 513 to 554 the chain is Cytoplasmic; it reads FLPETFNLPHTDIIKDMEKRKRLMSKNISKKEGQDFLETTEC.

This sequence belongs to the major facilitator (TC 2.A.1) superfamily. Organic cation transporter (TC 2.A.1.19) family. As to expression, specifically expressed in kidney where it is found in proximal convoluted tubules (at protein level). Colocalizes with the prostaglandin-inactivating enzyme HPGD in kidney (at protein level). Not detected in other tissues tested.

It localises to the basolateral cell membrane. Functionally, sodium-independent organic anion transporter which exhibits high specificity for a subset of prostaglandins including prostaglandin E2 (PGE2), prostaglandin E1 (PGE1), prostaglandin F2-alpha (PGF2-alpha) and prostaglandin D2 (PGD2). This Mus musculus (Mouse) protein is Solute carrier family 22 member 22.